Here is a 304-residue protein sequence, read N- to C-terminus: Cell surface-binding protein OPG105 (304 aa).

An Alpha-carbonic anhydrase domain is found at 1 to 235; the sequence is MPQQLSPINI…NDDTQVYYSG (235 aa). Residues 1–275 are Virion surface-facing; sequence MPQQLSPINI…YQKYIEENKT (275 aa). Residues 276 to 294 traverse the membrane as a helical segment; it reads FAIIAIVFVFILTAILFFM. Over 295 to 304 the chain is Intravirion; it reads SRRYSREKQN.

The protein belongs to the alpha-carbonic anhydrase family. Homodimer; disulfide-linked. In terms of processing, apparently non-glycosylated.

It localises to the virion membrane. Binds to chondroitin sulfate on the cell surface to provide virion attachment to target cell. This Bos taurus (Bovine) protein is Cell surface-binding protein OPG105 (OPG105).